Reading from the N-terminus, the 1220-residue chain is DNA polymerase III subunit alpha (1220 aa).

It belongs to the DNA polymerase type-C family. DnaE subfamily. As to quaternary structure, DNA polymerase III contains a core (composed of alpha, epsilon and theta chains) that associates with a tau subunit. This core dimerizes to form the PolIII' complex. PolIII' associates with the gamma complex (composed of gamma, delta, delta', psi and chi chains) and with the beta chain to form the complete DNA polymerase III complex.

The protein localises to the cytoplasm. It carries out the reaction DNA(n) + a 2'-deoxyribonucleoside 5'-triphosphate = DNA(n+1) + diphosphate. Its function is as follows. DNA polymerase III is a complex, multichain enzyme responsible for most of the replicative synthesis in bacteria. This DNA polymerase also exhibits 3' to 5' exonuclease activity. The alpha chain is the DNA polymerase. The sequence is that of DNA polymerase III subunit alpha (dnaE) from Thermus aquaticus.